A 297-amino-acid chain; its full sequence is Alpha-tubulin N-acetyltransferase 1 (297 aa).

Positions 1–186 (MEFDFDVHKI…NNFVVFDGFF (186 aa)) constitute an N-acetyltransferase domain. Residues 120 to 133 (FYIHETLQRHGFGK) and 156 to 165 (SEKFLSFLRK) contribute to the acetyl-CoA site. Positions 269 to 297 (LHRTANSEQEDHSQRRRTSSLNRPQSIHH) are disordered. Residues 287-297 (SSLNRPQSIHH) are compositionally biased toward polar residues.

Belongs to the acetyltransferase ATAT1 family.

Its subcellular location is the cytoplasm. The protein resides in the membrane. It localises to the clathrin-coated pit. It is found in the cell junction. The protein localises to the focal adhesion. Its subcellular location is the cell projection. The protein resides in the axon. It localises to the cytoskeleton. It is found in the spindle. The catalysed reaction is L-lysyl-[alpha-tubulin] + acetyl-CoA = N(6)-acetyl-L-lysyl-[alpha-tubulin] + CoA + H(+). Its function is as follows. Specifically acetylates 'Lys-40' in alpha-tubulin on the lumenal side of microtubules. Promotes microtubule destabilization and accelerates microtubule dynamics; this activity may be independent of acetylation activity. Acetylates alpha-tubulin with a slow enzymatic rate, due to a catalytic site that is not optimized for acetyl transfer. Enters the microtubule through each end and diffuses quickly throughout the lumen of microtubules. Acetylates only long/old microtubules because of its slow acetylation rate since it does not have time to act on dynamically unstable microtubules before the enzyme is released. May be involved in neuron development. This is Alpha-tubulin N-acetyltransferase 1 from Xenopus tropicalis (Western clawed frog).